A 173-amino-acid chain; its full sequence is ATP synthase subunit delta (173 aa).

The protein belongs to the ATPase delta chain family. In terms of assembly, F-type ATPases have 2 components, F(1) - the catalytic core - and F(0) - the membrane proton channel. F(1) has five subunits: alpha(3), beta(3), gamma(1), delta(1), epsilon(1). F(0) has three main subunits: a(1), b(2) and c(10-14). The alpha and beta chains form an alternating ring which encloses part of the gamma chain. F(1) is attached to F(0) by a central stalk formed by the gamma and epsilon chains, while a peripheral stalk is formed by the delta and b chains.

It localises to the cell inner membrane. F(1)F(0) ATP synthase produces ATP from ADP in the presence of a proton or sodium gradient. F-type ATPases consist of two structural domains, F(1) containing the extramembraneous catalytic core and F(0) containing the membrane proton channel, linked together by a central stalk and a peripheral stalk. During catalysis, ATP synthesis in the catalytic domain of F(1) is coupled via a rotary mechanism of the central stalk subunits to proton translocation. In terms of biological role, this protein is part of the stalk that links CF(0) to CF(1). It either transmits conformational changes from CF(0) to CF(1) or is implicated in proton conduction. The sequence is that of ATP synthase subunit delta from Campylobacter jejuni subsp. jejuni serotype O:2 (strain ATCC 700819 / NCTC 11168).